Consider the following 557-residue polypeptide: MEPKENGSELGQKIIDGPTNPMVTPLLNDLYQFTMAYAYWKAGKHNERSVFDLYFRKNPFGGEYTVFAGLEECVKFLANFKLTDEEIDFVQECLPGSEEAFCDYLRGLDCSDVEVYAIPEGSVVFPKVPLMRVEGPVGVVQLLETPFLNLVNFASLVATNAARHRFVAGKSKSLLEFGARRAQGPDGAISASKYCYLGGFDATSNVAAGKLFGIPLRGTHSHAYVSSFMSTDEIVDKVLRSADGKTTCEDFVSHVQTWLKKIQYSPSLSGIFSETNQSELAAFTSYALAFPKTFLALVDTYDVMKSGIPNFCAVALALNDFGYKALGIRLDSGDLAYLSREARNFFCTVERELKVPGFGKMVVTASNDLNEETIDALNKQGHEVDAFGIGTYLVTCYSQAALGCVFKLVEINNQPRIKLSEDVTKVSIPCKKRSYRLYGKEGYPLVDIMTGENEPPPKVGERLLCRHPFNESKRAYVVPQRVEELLKCYWRGSADEAREVLPPLKEIRDRCIKQLENMRPDHMRRLNPTPYKVSVSAKLYDFIHFLWLNEAPVGELQ.

Nicotinate is bound by residues Y31 and T219. Phosphohistidine is present on H222. R329 contacts nicotinate. Residue T391 coordinates 5-phospho-alpha-D-ribose 1-diphosphate.

The protein belongs to the NAPRTase family. It depends on Mg(2+) as a cofactor. Mn(2+) is required as a cofactor. In terms of processing, transiently phosphorylated on a His residue during the reaction cycle. Phosphorylation strongly increases the affinity for substrates and increases the rate of nicotinate D-ribonucleotide production. Dephosphorylation regenerates the low-affinity form of the enzyme, leading to product release.

The catalysed reaction is nicotinate + 5-phospho-alpha-D-ribose 1-diphosphate + ATP + H2O = nicotinate beta-D-ribonucleotide + ADP + phosphate + diphosphate. It functions in the pathway cofactor biosynthesis; NAD(+) biosynthesis; nicotinate D-ribonucleotide from nicotinate: step 1/1. Catalyzes the first step in the biosynthesis of NAD from nicotinic acid, the ATP-dependent synthesis of beta-nicotinate D-ribonucleotide from nicotinate and 5-phospho-D-ribose 1-phosphate. Helps prevent cellular oxidative stress via its role in NAD biosynthesis. In Arabidopsis thaliana (Mouse-ear cress), this protein is Nicotinate phosphoribosyltransferase 2.